The following is a 345-amino-acid chain: Methylthioribose-1-phosphate isomerase (345 aa).

Substrate-binding positions include 44–46 (RGA), arginine 86, and glutamine 194. Aspartate 235 (proton donor) is an active-site residue. A substrate-binding site is contributed by 245–246 (NK).

This sequence belongs to the eIF-2B alpha/beta/delta subunits family. MtnA subfamily.

It carries out the reaction 5-(methylsulfanyl)-alpha-D-ribose 1-phosphate = 5-(methylsulfanyl)-D-ribulose 1-phosphate. It functions in the pathway amino-acid biosynthesis; L-methionine biosynthesis via salvage pathway; L-methionine from S-methyl-5-thio-alpha-D-ribose 1-phosphate: step 1/6. In terms of biological role, catalyzes the interconversion of methylthioribose-1-phosphate (MTR-1-P) into methylthioribulose-1-phosphate (MTRu-1-P). The chain is Methylthioribose-1-phosphate isomerase from Desulfitobacterium hafniense (strain DSM 10664 / DCB-2).